Here is a 294-residue protein sequence, read N- to C-terminus: Nucleotide-binding protein Maqu_2718 (294 aa).

8 to 15 (GRSGSGKS) provides a ligand contact to ATP. 61–64 (DARN) lines the GTP pocket.

The protein belongs to the RapZ-like family.

In terms of biological role, displays ATPase and GTPase activities. This is Nucleotide-binding protein Maqu_2718 from Marinobacter nauticus (strain ATCC 700491 / DSM 11845 / VT8) (Marinobacter aquaeolei).